The sequence spans 189 residues: Ribonuclease HII (189 aa).

An RNase H type-2 domain is found at 1 to 189; it reads MIAGVDEAGR…IAALLKNNKK (189 aa). The a divalent metal cation site is built by Asp-6, Glu-7, and Asp-98.

This sequence belongs to the RNase HII family. Requires Mn(2+) as cofactor. Mg(2+) serves as cofactor.

The protein resides in the cytoplasm. The catalysed reaction is Endonucleolytic cleavage to 5'-phosphomonoester.. Its function is as follows. Endonuclease that specifically degrades the RNA of RNA-DNA hybrids. In Dichelobacter nodosus (strain VCS1703A), this protein is Ribonuclease HII.